Reading from the N-terminus, the 116-residue chain is NADH-ubiquinone oxidoreductase chain 3 (116 aa).

Helical transmembrane passes span 3 to 23 (LITT…TVSF), 56 to 76 (FFLI…LLPL), and 87 to 107 (LTLV…IYEW).

It belongs to the complex I subunit 3 family.

It is found in the mitochondrion membrane. The catalysed reaction is a ubiquinone + NADH + 5 H(+)(in) = a ubiquinol + NAD(+) + 4 H(+)(out). Functionally, core subunit of the mitochondrial membrane respiratory chain NADH dehydrogenase (Complex I) that is believed to belong to the minimal assembly required for catalysis. Complex I functions in the transfer of electrons from NADH to the respiratory chain. The immediate electron acceptor for the enzyme is believed to be ubiquinone. The protein is NADH-ubiquinone oxidoreductase chain 3 (MT-ND3) of Oncorhynchus kisutch (Coho salmon).